The following is a 75-amino-acid chain: Transaldolase (75 aa).

The protein belongs to the transaldolase family. Type 1 subfamily. Homodimer. Phosphorylated. In terms of tissue distribution, predominantly expressed in Y-organs.

It localises to the cytoplasm. It carries out the reaction D-sedoheptulose 7-phosphate + D-glyceraldehyde 3-phosphate = D-erythrose 4-phosphate + beta-D-fructose 6-phosphate. Its pathway is carbohydrate degradation; pentose phosphate pathway; D-glyceraldehyde 3-phosphate and beta-D-fructose 6-phosphate from D-ribose 5-phosphate and D-xylulose 5-phosphate (non-oxidative stage): step 2/3. Transaldolase is important for the balance of metabolites in the pentose-phosphate pathway. May play a role in the conversion of sterols into ecdysteroids via NADPH. In Carcinus maenas (Common shore crab), this protein is Transaldolase.